Here is a 325-residue protein sequence, read N- to C-terminus: Probable pectate lyase B (325 aa).

Residues 1-15 (MRLPTLFMLAAIATA) form the signal peptide. Ca(2+) is bound by residues Asp132, Asp161, and Asp165. Arg218 is an active-site residue.

This sequence belongs to the polysaccharide lyase 1 family. It depends on Ca(2+) as a cofactor.

The protein resides in the secreted. The catalysed reaction is Eliminative cleavage of (1-&gt;4)-alpha-D-galacturonan to give oligosaccharides with 4-deoxy-alpha-D-galact-4-enuronosyl groups at their non-reducing ends.. Functionally, pectinolytic enzyme consist of four classes of enzymes: pectin lyase, polygalacturonase, pectin methylesterase and rhamnogalacturonase. Among pectinolytic enzymes, pectin lyase is the most important in depolymerization of pectin, since it cleaves internal glycosidic bonds of highly methylated pectins. Favors pectate, the anion, over pectin, the methyl ester. The polypeptide is Probable pectate lyase B (plyB) (Aspergillus terreus (strain NIH 2624 / FGSC A1156)).